A 650-amino-acid polypeptide reads, in one-letter code: MYYGISQFSEAYNKILRNSSSHSSCQLVIFVSCLNIDALCATKMLSLLFKKQLVQSQIVPIFGYSELRRHYSQLDDNINSLLLVGFGGVIDLEAFLEIDPQEYVIDTDEKSGEQSFRRDIYVLDAHRPWNLDNIFGSQIIQCFDDGTVDDTLGEQKEAYYKLLELDEESGDDELSGDENDNNGGDDEATDADEVTDEDEEDEDETISNKRGNSSIGPNDLSKRKQRKKQIHEYEGVLEEYYSQGTTVVNSISAQIYSLLSAIGETNLSNLWLNILGTTSLDIAYAQVYNRLYPLLQDEVKRLTPSSRNSVKTPDTLTLNIQPDYYLFLLRHSSLYDSFYYSNYVNAKLSLWNENGKKRLHKMFARMGIPLSTAQETWLYMDHSIKRELGIIFDKNLDRYGLQDIIRDGFVRTLGYRGSISASEFVEALTALLEVGNSTDKDSVKINNDNNDDTDGEEEEDNSAQKLTNLRKRWVSNFWLSWDALDDRKVELLNRGIQLAQDLQRAIFNTGVAILEKKLIKHLRIYRLCVLQDGPDLDLYRNPLTLLRLGNWLIECCAESEDKQLLPMVLASIDENTDTYLVAGLTPRYPRGLDTIHTKKPILNNFSMAFQQITAETDAKVRIDNFESSIIEIRREDLSPFLEKLTLSGLL.

Acidic residues-rich tracts occupy residues 168–205 (ESGD…EDET) and 449–461 (NNDD…EEDN). Disordered regions lie at residues 168–227 (ESGD…KQRK) and 442–462 (SVKI…EDNS). Position 453 is a phosphothreonine (Thr-453).

This sequence belongs to the CDC45 family. In terms of assembly, assembles into a complex with MCM5/CDC46. Interacts with MCM10.

It localises to the nucleus. Functionally, required for initiation of chromosomal DNA replication. Acts at the origin of replication. Also has a role in minichromosome maintenance. This chain is Cell division control protein 45 (CDC45), found in Saccharomyces cerevisiae (strain ATCC 204508 / S288c) (Baker's yeast).